Reading from the N-terminus, the 435-residue chain is UDP-N-acetylmuramate--L-alanine ligase (435 aa).

Residue 108–114 (GSHGKTS) coordinates ATP.

It belongs to the MurCDEF family.

It localises to the cytoplasm. It carries out the reaction UDP-N-acetyl-alpha-D-muramate + L-alanine + ATP = UDP-N-acetyl-alpha-D-muramoyl-L-alanine + ADP + phosphate + H(+). The protein operates within cell wall biogenesis; peptidoglycan biosynthesis. Functionally, cell wall formation. In Shouchella clausii (strain KSM-K16) (Alkalihalobacillus clausii), this protein is UDP-N-acetylmuramate--L-alanine ligase.